A 177-amino-acid polypeptide reads, in one-letter code: uncharacterized protein (177 aa).

This is an uncharacterized protein from Grapevine virus A (isolate Is 151) (GVA).